The sequence spans 558 residues: Trehalase 1 (558 aa).

The protein belongs to the glycosyl hydrolase 15 family.

The enzyme catalyses alpha,alpha-trehalose + H2O = alpha-D-glucose + beta-D-glucose. The protein operates within glycan degradation; trehalose degradation; D-glucose from alpha,alpha-trehalose: step 1/1. Functionally, catalyzes the hydrolysis of alpha,alpha-trehalose into two molecules of D-glucose. This chain is Trehalase 1 (treH1), found in Sulfolobus acidocaldarius (strain ATCC 33909 / DSM 639 / JCM 8929 / NBRC 15157 / NCIMB 11770).